We begin with the raw amino-acid sequence, 286 residues long: Bifunctional protein FolD (286 aa).

NADP(+) contacts are provided by residues 165 to 167, serine 190, and valine 231; that span reads GRS.

It belongs to the tetrahydrofolate dehydrogenase/cyclohydrolase family. As to quaternary structure, homodimer.

The enzyme catalyses (6R)-5,10-methylene-5,6,7,8-tetrahydrofolate + NADP(+) = (6R)-5,10-methenyltetrahydrofolate + NADPH. It carries out the reaction (6R)-5,10-methenyltetrahydrofolate + H2O = (6R)-10-formyltetrahydrofolate + H(+). It participates in one-carbon metabolism; tetrahydrofolate interconversion. Its function is as follows. Catalyzes the oxidation of 5,10-methylenetetrahydrofolate to 5,10-methenyltetrahydrofolate and then the hydrolysis of 5,10-methenyltetrahydrofolate to 10-formyltetrahydrofolate. The polypeptide is Bifunctional protein FolD (Bacillus cereus (strain B4264)).